Reading from the N-terminus, the 466-residue chain is Ras-GEF domain-containing family member 1C (466 aa).

Over residues 1 to 23 the composition is skewed to polar residues; sequence MPQTLSASDMVTPGSLSPPTTEP. Disordered stretches follow at residues 1–35 and 443–466; these read MPQT…PLLD and SESP…LGKT. The 131-residue stretch at 34–164 folds into the N-terminal Ras-GEF domain; the sequence is LDGAPSSASL…LLQALHQKLA (131 aa). Positions 200 to 446 constitute a Ras-GEF domain; sequence DPYTLAQQLT…YLASYESESP (247 aa).

Guanine nucleotide exchange factor (GEF). The polypeptide is Ras-GEF domain-containing family member 1C (RASGEF1C) (Macaca fascicularis (Crab-eating macaque)).